We begin with the raw amino-acid sequence, 101 residues long: Phosphoribosyl-AMP cyclohydrolase (101 aa).

A Mg(2+)-binding site is contributed by D71. C72 is a binding site for Zn(2+). 2 residues coordinate Mg(2+): D73 and D75. Residues C88 and C95 each contribute to the Zn(2+) site.

Belongs to the PRA-CH family. Homodimer. Mg(2+) is required as a cofactor. Requires Zn(2+) as cofactor.

The protein resides in the cytoplasm. It carries out the reaction 1-(5-phospho-beta-D-ribosyl)-5'-AMP + H2O = 1-(5-phospho-beta-D-ribosyl)-5-[(5-phospho-beta-D-ribosylamino)methylideneamino]imidazole-4-carboxamide. It participates in amino-acid biosynthesis; L-histidine biosynthesis; L-histidine from 5-phospho-alpha-D-ribose 1-diphosphate: step 3/9. Functionally, catalyzes the hydrolysis of the adenine ring of phosphoribosyl-AMP. This Bacillus cereus (strain AH187) protein is Phosphoribosyl-AMP cyclohydrolase.